Consider the following 366-residue polypeptide: Ribosomal RNA large subunit methyltransferase M (366 aa).

S-adenosyl-L-methionine is bound by residues Ser188, 221–224 (CPGG), Asp240, Asp260, and Asp277. The active-site Proton acceptor is the Lys306.

The protein belongs to the class I-like SAM-binding methyltransferase superfamily. RNA methyltransferase RlmE family. RlmM subfamily. In terms of assembly, monomer.

The protein resides in the cytoplasm. The catalysed reaction is cytidine(2498) in 23S rRNA + S-adenosyl-L-methionine = 2'-O-methylcytidine(2498) in 23S rRNA + S-adenosyl-L-homocysteine + H(+). In terms of biological role, catalyzes the 2'-O-methylation at nucleotide C2498 in 23S rRNA. The polypeptide is Ribosomal RNA large subunit methyltransferase M (Pectobacterium carotovorum subsp. carotovorum (strain PC1)).